The following is a 354-amino-acid chain: Acyl-CoA-binding domain-containing protein 2 (354 aa).

Residues 11-31 (VILGLIFSYLLAKLISIVVTF) form a helical; Signal-anchor membrane-spanning segment. Residues 75-96 (AEQGSSRSDSVAGDDSEEDDDW) form a disordered region. A compositionally biased stretch (acidic residues) spans 86 to 96 (AGDDSEEDDDW). The ACB domain occupies 104 to 194 (LDEAFSAATL…VTQLYPTWLD (91 aa)). Residues 136–140 (YGLYK), Lys162, and Tyr181 contribute to the an acyl-CoA site. ANK repeat units lie at residues 265 to 294 (EGRTPLHWAIDRGHLNIAKVLVDKNADVNA) and 298 to 327 (EGQTPLHYAVVCDREAIAEFLVKQNANTAA).

It belongs to the ACBP family. In terms of assembly, interacts (via ankyrin repeats) with HIPP26 and the ethylene-responsive element-binding proteins RAP2-3/EBP and RAP2-12. Interacts with CSE. Mostly expressed in roots and flowers, and, to a lower extent, in stems, pods and leaves (at protein level).

Its subcellular location is the cell membrane. The protein resides in the endoplasmic reticulum membrane. The protein localises to the peroxisome membrane. Functionally, binds medium- and long-chain acyl-CoA esters with very high affinity. Can interact in vitro with palmitoyl-CoA, but not with oleoyl-CoA. Binds to lead ions (Pb). May function as an intracellular carrier of acyl-CoA esters. Required for proper phospholipid and, to a lower extent, galactolipid composition. The polypeptide is Acyl-CoA-binding domain-containing protein 2 (ACBP2) (Arabidopsis thaliana (Mouse-ear cress)).